The sequence spans 216 residues: Adenylate kinase (216 aa).

10-15 (GAGKGT) contacts ATP. The interval 30–59 (STGDMFRAAIKEGTPLGLQAKEYMDRGDLV) is NMP. AMP contacts are provided by residues T31, R36, 57 to 59 (DLV), 85 to 88 (GFPR), and Q92. Positions 126–163 (GRRICKNCGATYHLVFNPPAKSGVCDKCGGELYQRADD) are LID. R127 provides a ligand contact to ATP. 2 residues coordinate Zn(2+): C130 and C133. ATP is bound at residue 136 to 137 (TY). Positions 150 and 153 each coordinate Zn(2+). The AMP site is built by R160 and R171. Q199 is an ATP binding site.

It belongs to the adenylate kinase family. Monomer.

The protein resides in the cytoplasm. The enzyme catalyses AMP + ATP = 2 ADP. It functions in the pathway purine metabolism; AMP biosynthesis via salvage pathway; AMP from ADP: step 1/1. Its function is as follows. Catalyzes the reversible transfer of the terminal phosphate group between ATP and AMP. Plays an important role in cellular energy homeostasis and in adenine nucleotide metabolism. The chain is Adenylate kinase from Geobacillus sp. (strain WCH70).